A 575-amino-acid chain; its full sequence is U3 small nucleolar RNA-associated protein 9 (575 aa).

Composition is skewed to basic and acidic residues over residues 340 to 355 (NEKN…KLEE) and 364 to 375 (VQHEKKETETKI). A disordered region spans residues 340-375 (NEKNNADEADQKKLEEKEEEAQPEVQHEKKETETKI). S547 and S564 each carry phosphoserine.

Interacts with snoRNA U3. Interacts with MPP10. Component of the ribosomal small subunit (SSU) processome composed of at least 40 protein subunits and snoRNA U3. In the absence of snoRNA3, forms a complex with other t-UTPs. This complex can associate with pre-18S ribosomal RNAs.

It localises to the nucleus. The protein localises to the nucleolus. Its function is as follows. Involved in nucleolar processing of pre-18S ribosomal RNA. Required for optimal pre-ribosomal RNA transcription by RNA polymerase I together with a subset of U3 proteins required for transcription (t-UTPs). The sequence is that of U3 small nucleolar RNA-associated protein 9 (UTP9) from Saccharomyces cerevisiae (strain ATCC 204508 / S288c) (Baker's yeast).